A 277-amino-acid chain; its full sequence is Small ribosomal subunit protein uS2 (277 aa).

Residues leucine 247 to asparagine 277 form a disordered region. Acidic residues predominate over residues serine 253–glutamate 264. Basic and acidic residues predominate over residues glutamate 265 to asparagine 277.

This sequence belongs to the universal ribosomal protein uS2 family.

The sequence is that of Small ribosomal subunit protein uS2 (rpsB) from Chlamydia pneumoniae (Chlamydophila pneumoniae).